Reading from the N-terminus, the 557-residue chain is Suprabasin (557 aa).

Positions 1–23 (MHLASLLSSCSLLLLLGALPGWA) are cleaved as a signal peptide. Disordered regions lie at residues 150–175 (RFGQ…GAHH), 422–441 (GQGA…KVAQ), 464–490 (AAGQ…GKQE), and 509–533 (NQLL…TTLT). A compositionally biased stretch (low complexity) spans 153–175 (QGAHHATGQAGKEAEKFGQGAHH). Positions 476–487 (GQGVHHAAGQAG) are enriched in low complexity.

The protein resides in the secreted. The sequence is that of Suprabasin (SBSN) from Bos taurus (Bovine).